The chain runs to 591 residues: ATP-dependent lipid A-core flippase (591 aa).

5 helical membrane passes run 34–54 (LILA…LAVI), 71–91 (IWSV…CNFF), 158–178 (LVVI…TVII), 258–278 (LTPL…AVAL), and 285–305 (TLTA…FDPI). Residues 35-317 (ILAVLLMAGA…LTNLASKMQK (283 aa)) enclose the ABC transmembrane type-1 domain. An ABC transporter domain is found at 350 to 586 (IEFRQIGHRF…GGLYATLYNM (237 aa)). 384–391 (GRSGSGKT) is a binding site for ATP.

This sequence belongs to the ABC transporter superfamily. Lipid exporter (TC 3.A.1.106) family. In terms of assembly, homodimer.

The protein localises to the cell inner membrane. The enzyme catalyses ATP + H2O + lipid A-core oligosaccharideSide 1 = ADP + phosphate + lipid A-core oligosaccharideSide 2.. Its function is as follows. Involved in lipopolysaccharide (LPS) biosynthesis. Translocates lipid A-core from the inner to the outer leaflet of the inner membrane. Transmembrane domains (TMD) form a pore in the inner membrane and the ATP-binding domain (NBD) is responsible for energy generation. The protein is ATP-dependent lipid A-core flippase of Bordetella avium (strain 197N).